Here is a 529-residue protein sequence, read N- to C-terminus: MNNARPIRRALLSVSDKTGILEFAQALHAQGVELLSTGGTARLLADNGVPVIEVSDYTGHPEIMDGRVKTLHPKVHGGILARRGIDEIVMEQNNIKPIDLVAVNLYPFAATVAAEGCTLADAIENIDIGGPTMVRSTAKNHKDTTIIVNANDYGRVIAEMQANQGSTTLETRFDLAIAAFEHTAAYDGMIANYFGTKVPAHSKDECHEDSKFPRTYNTQLVKKQDLRYGENSHQTAAFYVDTHLDEASVATAVQLQGKALSYNNIADTDSALECVKEFDEPACVIVKHANPCGVAIGENLLEAYNRAFQTDPTSAFGGIIAFNGELDAATASAIVERQFVEVIIAPKVSQAARDVIAAKANVRVLECGQWASKTTSLDYKRVNGGLLLQDRDQGMVGIDDVKVVSKRQPTASEMKDLMFCWKVAKFVKSNAIVYAKNSMTIGVGAGQMSRVYSAKVAGIKAADEGLEVQDSVMASDAFFPFRDGIDAAAEAGISCIIQPGGSIRDEEIIAAADEHGMAMVFTGMRHFRH.

Residues 1-148 (MNNARPIRRA…KNHKDTTIIV (148 aa)) enclose the MGS-like domain.

The protein belongs to the PurH family.

The catalysed reaction is (6R)-10-formyltetrahydrofolate + 5-amino-1-(5-phospho-beta-D-ribosyl)imidazole-4-carboxamide = 5-formamido-1-(5-phospho-D-ribosyl)imidazole-4-carboxamide + (6S)-5,6,7,8-tetrahydrofolate. The enzyme catalyses IMP + H2O = 5-formamido-1-(5-phospho-D-ribosyl)imidazole-4-carboxamide. It functions in the pathway purine metabolism; IMP biosynthesis via de novo pathway; 5-formamido-1-(5-phospho-D-ribosyl)imidazole-4-carboxamide from 5-amino-1-(5-phospho-D-ribosyl)imidazole-4-carboxamide (10-formyl THF route): step 1/1. Its pathway is purine metabolism; IMP biosynthesis via de novo pathway; IMP from 5-formamido-1-(5-phospho-D-ribosyl)imidazole-4-carboxamide: step 1/1. This chain is Bifunctional purine biosynthesis protein PurH, found in Shewanella halifaxensis (strain HAW-EB4).